The chain runs to 386 residues: 17-hydroxy-3-oxo-4-pregnene-20-carboxyl-CoA lyase (386 aa).

Tyrosine 292 functions as the Proton acceptor in the catalytic mechanism. The active-site Proton donor is the tyrosine 342.

This sequence belongs to the thiolase-like superfamily. As to quaternary structure, homodimer. Interacts with the ChsH1/ChsH2 hydratase via the DUF35 C-terminal region of ChsH2 (ChsH2-DUF35). The ChsH1-ChsH2-Ltp2 protein complex is composed of two protomers that form a heterohexameric structure through the Ltp2 dimerization interface.

It catalyses the reaction 17-hydroxy-3-oxochol-4-en-22-oyl-CoA = androst-4-ene-3,17-dione + propanoyl-CoA. It participates in steroid metabolism; cholesterol degradation. Functionally, involved in cholesterol side chain degradation. When associated with the ChsH1/ChsH2 hydratase, catalyzes the retroaldol cleavage of 17-hydroxy-3-oxo-4-pregnene-20-carboxyl-CoA (17-HOPC-CoA) produced by the hydratase, forming androst-4-ene-3,17-dione and propionyl-CoA. The protein is 17-hydroxy-3-oxo-4-pregnene-20-carboxyl-CoA lyase of Mycobacterium tuberculosis (strain ATCC 25618 / H37Rv).